The sequence spans 150 residues: Anthranilate synthase component 1 (150 aa).

Residue serine 40 participates in L-tryptophan binding. Arginine 119 is a binding site for chorismate.

Belongs to the anthranilate synthase component I family. As to quaternary structure, heterotetramer consisting of two non-identical subunits: a beta subunit (TrpG) and a large alpha subunit (TrpE). The cofactor is Mg(2+).

It catalyses the reaction chorismate + L-glutamine = anthranilate + pyruvate + L-glutamate + H(+). The protein operates within amino-acid biosynthesis; L-tryptophan biosynthesis; L-tryptophan from chorismate: step 1/5. With respect to regulation, feedback inhibited by tryptophan. Part of a heterotetrameric complex that catalyzes the two-step biosynthesis of anthranilate, an intermediate in the biosynthesis of L-tryptophan. In the first step, the glutamine-binding beta subunit (TrpG) of anthranilate synthase (AS) provides the glutamine amidotransferase activity which generates ammonia as a substrate that, along with chorismate, is used in the second step, catalyzed by the large alpha subunit of AS (TrpE) to produce anthranilate. In the absence of TrpG, TrpE can synthesize anthranilate directly from chorismate and high concentrations of ammonia. The chain is Anthranilate synthase component 1 (trpE) from Citrobacter freundii.